The primary structure comprises 208 residues: 2-phospho-L-lactate guanylyltransferase (208 aa).

It belongs to the CofC family. In terms of assembly, homodimer.

It catalyses the reaction (2S)-2-phospholactate + GTP + H(+) = (2S)-lactyl-2-diphospho-5'-guanosine + diphosphate. It participates in cofactor biosynthesis; coenzyme F420 biosynthesis. Guanylyltransferase that catalyzes the activation of (2S)-2-phospholactate (2-PL) as (2S)-lactyl-2-diphospho-5'-guanosine, via the condensation of 2-PL with GTP. It is involved in the biosynthesis of coenzyme F420, a hydride carrier cofactor. The protein is 2-phospho-L-lactate guanylyltransferase of Haloarcula marismortui (strain ATCC 43049 / DSM 3752 / JCM 8966 / VKM B-1809) (Halobacterium marismortui).